A 414-amino-acid polypeptide reads, in one-letter code: Serine hydroxymethyltransferase (414 aa).

Residues Leu-117 and 121-123 (GHL) contribute to the (6S)-5,6,7,8-tetrahydrofolate site. N6-(pyridoxal phosphate)lysine is present on Lys-226.

Belongs to the SHMT family. In terms of assembly, homodimer. The cofactor is pyridoxal 5'-phosphate.

Its subcellular location is the cytoplasm. It catalyses the reaction (6R)-5,10-methylene-5,6,7,8-tetrahydrofolate + glycine + H2O = (6S)-5,6,7,8-tetrahydrofolate + L-serine. The protein operates within one-carbon metabolism; tetrahydrofolate interconversion. It participates in amino-acid biosynthesis; glycine biosynthesis; glycine from L-serine: step 1/1. Functionally, catalyzes the reversible interconversion of serine and glycine with tetrahydrofolate (THF) serving as the one-carbon carrier. This reaction serves as the major source of one-carbon groups required for the biosynthesis of purines, thymidylate, methionine, and other important biomolecules. Also exhibits THF-independent aldolase activity toward beta-hydroxyamino acids, producing glycine and aldehydes, via a retro-aldol mechanism. The protein is Serine hydroxymethyltransferase of Dictyoglomus thermophilum (strain ATCC 35947 / DSM 3960 / H-6-12).